A 1135-amino-acid chain; its full sequence is Glutamate receptor ionotropic, NMDA 3A (1135 aa).

Residues M1–L23 form the signal peptide. Residues V24 to H674 are Extracellular-facing. The disordered stretch occupies residues T60 to A117. 10 N-linked (GlcNAc...) asparagine glycosylation sites follow: N145, N264, N275, N285, N296, N300, N426, N439, N549, and N565. 2 disulfides stabilise this stretch: C537/C575 and C543/C576. Positions 631, 633, and 638 each coordinate glycine. Residues S633 and R638 each contribute to the D-serine site. The chain crosses the membrane as a helical span at residues W675–L694. Residues Y695–S715 lie on the Cytoplasmic side of the membrane. Positions F716 to L727 form an intramembrane region, discontinuously helical. Residues F728–T741 lie on the Cytoplasmic side of the membrane. The helical transmembrane segment at G742–T761 threads the bilayer. Topologically, residues A762–S932 are extracellular. Glycine is bound at residue S801. Positions 801, 802, and 845 each coordinate D-serine. D845 serves as a coordination point for glycine. C859 and C913 are joined by a disulfide. An N-linked (GlcNAc...) asparagine glycan is attached at N886. The chain crosses the membrane as a helical span at residues G933–T948. The Cytoplasmic segment spans residues T949–S1135. A PPP2CB binding site region spans residues G951–F987. A coiled-coil region spans residues T1080–T1129. Positions N1082 to L1115 are GIT1-binding.

The protein belongs to the glutamate-gated ion channel (TC 1.A.10.1) family. NR3A/GRIN3A subfamily. As to quaternary structure, heterotetramer. Forms heterotetrameric channels composed of two GluN1/zeta subunits (GRIN1), and two identical GluN3 subunits (GRIN3A or GRIN3B) (in vitro). Can also form heterotetrameric channels that contain at least two GluN1 subunits and at least a combination of one GluN2 and one GluN3 subunits (in vitro). Does not form functional homomeric channels. Found in a complex with GRIN1, GRIN2A or GRIN2B and PPP2CB. Probably interacts with PPP2CB. No complex with PPP2CB is detected when NMDARs are stimulated by NMDA. Interacts (via C-terminus) with GIT1, but not with GRIA1/GluA1, nor with synaptophysin/SYP; this interaction competes with GIT1 interaction with ARHGEF7/beta-PIX. In terms of processing, N-glycosylated. Isoform 1 and isoform 2 are expressed in olfactory bulb, frontal occipital, entorhinal and pyriform cortices, hippocampus, striatum, thalamus, cerebellum and spinal cord.

It localises to the cell membrane. The protein localises to the postsynaptic cell membrane. The protein resides in the postsynaptic density. It carries out the reaction Ca(2+)(in) = Ca(2+)(out). The enzyme catalyses Na(+)(in) = Na(+)(out). With respect to regulation, excitatory glycine receptors are inhibited by D-serine at a concentrion of 10uM. In terms of biological role, component of a non-conventional N-methyl-D-aspartate (NMDA) receptors (NMDARs) that function as heterotetrameric, ligand-gated cation channels with low calcium permeability and low voltage-dependent block by Mg(2+). During the development of neural circuits, participates in the synaptic refinement period, restricting spine maturation and growth. Forms glutamatergic receptor complexes with GluN1 and GluN2 subunits which are activated by glycine binding to the GluN1 and GluN3 subunits and L-glutamate binding to GluN2 subunits. Forms excitatory glycinergic receptor complexes with GluN1 alone which are activated by glycine binding to the GluN1 and GluN3 subunits. GluN3A subunit also binds D-serine. Each GluN3 subunit confers differential attributes to channel properties, including activation, deactivation and desensitization kinetics, pH sensitivity, Ca2(+) permeability, and binding to allosteric modulators. By competing with GIT1 interaction with ARHGEF7/beta-PIX, may reduce GIT1/ARHGEF7-regulated local activation of RAC1, hence affecting signaling and limiting the maturation and growth of inactive synapses. The polypeptide is Glutamate receptor ionotropic, NMDA 3A (Rattus norvegicus (Rat)).